Here is a 195-residue protein sequence, read N- to C-terminus: Keratin-associated protein 4-3 (195 aa).

28 repeat units span residues 34–38, 39–43, 44–48, 49–53, 54–58, 59–63, 64–68, 69–73, 74–78, 79–83, 84–88, 89–93, 94–98, 99–103, 104–108, 109–113, 114–118, 119–123, 124–128, 129–133, 134–138, 144–148, 149–153, 154–158, 159–163, 164–168, 179–183, and 189–193. Positions 34 to 193 are 29 X 5 AA repeats of C-C-[GIKRQVH]-[SPT]-[STA]; the sequence is CCRTTCCRPS…CFHPICCGSS (160 aa).

The protein belongs to the KRTAP type 4 family. As to quaternary structure, interacts with hair keratins. As to expression, expressed specifically in the middle/uper portions of the hair cortex. Not detected in the hair matrix or cuticle.

In terms of biological role, in the hair cortex, hair keratin intermediate filaments are embedded in an interfilamentous matrix, consisting of hair keratin-associated proteins (KRTAP), which are essential for the formation of a rigid and resistant hair shaft through their extensive disulfide bond cross-linking with abundant cysteine residues of hair keratins. The matrix proteins include the high-sulfur and high-glycine-tyrosine keratins. This is Keratin-associated protein 4-3 (KRTAP4-3) from Homo sapiens (Human).